Reading from the N-terminus, the 279-residue chain is Release factor glutamine methyltransferase (279 aa).

S-adenosyl-L-methionine contacts are provided by D139 and N182. 182 to 185 (NPPY) is a binding site for substrate.

It belongs to the protein N5-glutamine methyltransferase family. PrmC subfamily.

The catalysed reaction is L-glutaminyl-[peptide chain release factor] + S-adenosyl-L-methionine = N(5)-methyl-L-glutaminyl-[peptide chain release factor] + S-adenosyl-L-homocysteine + H(+). Methylates the class 1 translation termination release factors RF1/PrfA and RF2/PrfB on the glutamine residue of the universally conserved GGQ motif. The sequence is that of Release factor glutamine methyltransferase from Thermodesulfovibrio yellowstonii (strain ATCC 51303 / DSM 11347 / YP87).